The primary structure comprises 586 residues: Arginine--tRNA ligase (586 aa).

The 'HIGH' region signature appears at alanine 133 to serine 143.

It belongs to the class-I aminoacyl-tRNA synthetase family. In terms of assembly, monomer.

The protein resides in the cytoplasm. It carries out the reaction tRNA(Arg) + L-arginine + ATP = L-arginyl-tRNA(Arg) + AMP + diphosphate. This chain is Arginine--tRNA ligase, found in Leptospira interrogans serogroup Icterohaemorrhagiae serovar Lai (strain 56601).